Reading from the N-terminus, the 201-residue chain is NF-kappa-B inhibitor-interacting Ras-like protein (201 aa).

The interval Asn3–Ala201 is small GTPase-like. GTP is bound at residue Gly16 to Thr23. Residues Leu40–Tyr48 carry the Effector region motif. Residues Asp67–Leu71 and Asn127–Ala130 contribute to the GTP site.

It belongs to the small GTPase superfamily. Ras family. KappaB-Ras subfamily. As to quaternary structure, interacts with NF-kappa-B inhibitor cactus.

Atypical Ras-like protein that may act as a regulator of NF-kappa-B activity, possibly by preventing the degradation of NF-kappa-B inhibitor cactus. This chain is NF-kappa-B inhibitor-interacting Ras-like protein (kappaB-Ras), found in Drosophila melanogaster (Fruit fly).